The primary structure comprises 425 residues: tRNA(Ile)-lysidine synthase (425 aa).

27–32 serves as a coordination point for ATP; that stretch reads SGGLDS.

It belongs to the tRNA(Ile)-lysidine synthase family.

Its subcellular location is the cytoplasm. It carries out the reaction cytidine(34) in tRNA(Ile2) + L-lysine + ATP = lysidine(34) in tRNA(Ile2) + AMP + diphosphate + H(+). Ligates lysine onto the cytidine present at position 34 of the AUA codon-specific tRNA(Ile) that contains the anticodon CAU, in an ATP-dependent manner. Cytidine is converted to lysidine, thus changing the amino acid specificity of the tRNA from methionine to isoleucine. This chain is tRNA(Ile)-lysidine synthase, found in Streptococcus pneumoniae (strain JJA).